Here is a 226-residue protein sequence, read N- to C-terminus: Lipoprotein-releasing system ATP-binding protein LolD (226 aa).

One can recognise an ABC transporter domain in the interval 5–226 (LKATNINKIY…LLRNGHWENY (222 aa)). ATP is bound at residue 41-48 (GTSGSGKS).

This sequence belongs to the ABC transporter superfamily. Lipoprotein translocase (TC 3.A.1.125) family. The complex is composed of two ATP-binding proteins (LolD) and two transmembrane proteins (LolC and LolE).

Its subcellular location is the cell inner membrane. Functionally, part of the ABC transporter complex LolCDE involved in the translocation of mature outer membrane-directed lipoproteins, from the inner membrane to the periplasmic chaperone, LolA. Responsible for the formation of the LolA-lipoprotein complex in an ATP-dependent manner. This Psychrobacter arcticus (strain DSM 17307 / VKM B-2377 / 273-4) protein is Lipoprotein-releasing system ATP-binding protein LolD.